The primary structure comprises 422 residues: RNA exonuclease 4 (422 aa).

The segment at 1–194 is disordered; it reads MGKAKVPASK…APAPPTEEDI (194 aa). At serine 15 the chain carries Phosphoserine. Residues 26–40 are compositionally biased toward basic residues; the sequence is LTRKKNKKKKRFWKS. Phosphoserine occurs at positions 96 and 111. Basic and acidic residues-rich tracts occupy residues 106-127 and 151-176; these read NKKE…DQEA and GTEH…DIEH. Lysine 115 participates in a covalent cross-link: Glycyl lysine isopeptide (Lys-Gly) (interchain with G-Cter in SUMO2). The region spanning 243-394 is the Exonuclease domain; the sequence is ALALDCEMVG…QDAQAAMRLY (152 aa).

This sequence belongs to the REXO4 family. As to quaternary structure, can bind ESR1 and ESR2. This interaction is abrogated by estrogen and augmented by tamoxifen treatment.

It is found in the nucleus. It localises to the nucleolus. This is RNA exonuclease 4 (REXO4) from Homo sapiens (Human).